A 420-amino-acid polypeptide reads, in one-letter code: Histidine--tRNA ligase (420 aa).

It belongs to the class-II aminoacyl-tRNA synthetase family. As to quaternary structure, homodimer.

It localises to the cytoplasm. The enzyme catalyses tRNA(His) + L-histidine + ATP = L-histidyl-tRNA(His) + AMP + diphosphate + H(+). This chain is Histidine--tRNA ligase, found in Ureaplasma parvum serovar 3 (strain ATCC 27815 / 27 / NCTC 11736).